A 381-amino-acid chain; its full sequence is ATP synthase subunit a (381 aa).

The disordered stretch occupies residues 24 to 73; that stretch reads PVAAPVEQHGQAPEAAPDAHGSPAGEPGAAVEAHAAAAEHGEAAGHEGGH. Positions 47-59 are enriched in low complexity; sequence AGEPGAAVEAHAA. Residues 60 to 73 show a composition bias toward basic and acidic residues; that stretch reads AAEHGEAAGHEGGH. 6 helical membrane passes run 128–148, 190–210, 215–235, 255–275, 290–310, and 316–336; these read KHVV…LGAV, LVTA…PFSA, NLSV…YAAI, LAPL…TKPF, FVIL…VAFG, and LSIF…FTML. Over residues 351-360 the composition is skewed to basic and acidic residues; the sequence is DHGHAEEHGH. The disordered stretch occupies residues 351 to 381; it reads DHGHAEEHGHAGPAAGSEHGSHVAGASPGHG.

This sequence belongs to the ATPase A chain family. F-type ATPases have 2 components, CF(1) - the catalytic core - and CF(0) - the membrane proton channel. CF(1) has five subunits: alpha(3), beta(3), gamma(1), delta(1), epsilon(1). CF(0) has three main subunits: a(1), b(2) and c(9-12). The alpha and beta chains form an alternating ring which encloses part of the gamma chain. CF(1) is attached to CF(0) by a central stalk formed by the gamma and epsilon chains, while a peripheral stalk is formed by the delta and b chains.

It localises to the cell inner membrane. Key component of the proton channel; it plays a direct role in the translocation of protons across the membrane. The protein is ATP synthase subunit a of Anaeromyxobacter dehalogenans (strain 2CP-C).